A 137-amino-acid chain; its full sequence is 6,7-dimethyl-8-ribityllumazine synthase (137 aa).

Residues Phe11, 43–45 (SFD), and 67–69 (CVI) each bind 5-amino-6-(D-ribitylamino)uracil. Residue 72–73 (DT) participates in (2S)-2-hydroxy-3-oxobutyl phosphate binding. The Proton donor role is filled by His75. Leu100 contributes to the 5-amino-6-(D-ribitylamino)uracil binding site. Residue Arg115 participates in (2S)-2-hydroxy-3-oxobutyl phosphate binding.

Belongs to the DMRL synthase family. Forms an icosahedral capsid composed of 60 subunits, arranged as a dodecamer of pentamers.

The enzyme catalyses (2S)-2-hydroxy-3-oxobutyl phosphate + 5-amino-6-(D-ribitylamino)uracil = 6,7-dimethyl-8-(1-D-ribityl)lumazine + phosphate + 2 H2O + H(+). It functions in the pathway cofactor biosynthesis; riboflavin biosynthesis; riboflavin from 2-hydroxy-3-oxobutyl phosphate and 5-amino-6-(D-ribitylamino)uracil: step 1/2. Functionally, catalyzes the formation of 6,7-dimethyl-8-ribityllumazine by condensation of 5-amino-6-(D-ribitylamino)uracil with 3,4-dihydroxy-2-butanone 4-phosphate. This is the penultimate step in the biosynthesis of riboflavin. In Methanococcus maripaludis (strain C5 / ATCC BAA-1333), this protein is 6,7-dimethyl-8-ribityllumazine synthase.